The chain runs to 559 residues: Arginine--tRNA ligase (559 aa).

Positions 116-126 (ANPNGPLHVGH) match the 'HIGH' region motif.

This sequence belongs to the class-I aminoacyl-tRNA synthetase family.

Its subcellular location is the cytoplasm. It carries out the reaction tRNA(Arg) + L-arginine + ATP = L-arginyl-tRNA(Arg) + AMP + diphosphate. This Methanosphaerula palustris (strain ATCC BAA-1556 / DSM 19958 / E1-9c) protein is Arginine--tRNA ligase.